The chain runs to 755 residues: Thermostable beta-glucosidase B (755 aa).

Asp-231 is a catalytic residue.

The protein belongs to the glycosyl hydrolase 3 family.

It catalyses the reaction Hydrolysis of terminal, non-reducing beta-D-glucosyl residues with release of beta-D-glucose.. Its pathway is glycan metabolism; cellulose degradation. The polypeptide is Thermostable beta-glucosidase B (bglB) (Acetivibrio thermocellus (strain ATCC 27405 / DSM 1237 / JCM 9322 / NBRC 103400 / NCIMB 10682 / NRRL B-4536 / VPI 7372) (Clostridium thermocellum)).